The following is a 448-amino-acid chain: Argininosuccinate synthase (448 aa).

Residues 17 to 25 (AFSGGLDTS) and A43 contribute to the ATP site. Position 99 (Y99) interacts with L-citrulline. G129 and T131 together coordinate ATP. L-aspartate is bound by residues T131, N135, and D136. N135 is a binding site for L-citrulline. D136 is an ATP binding site. Residues R139 and S192 each coordinate L-citrulline. D194 lines the ATP pocket. Residues T201, E203, and E280 each contribute to the L-citrulline site.

It belongs to the argininosuccinate synthase family. Type 2 subfamily. As to quaternary structure, homotetramer.

Its subcellular location is the cytoplasm. The catalysed reaction is L-citrulline + L-aspartate + ATP = 2-(N(omega)-L-arginino)succinate + AMP + diphosphate + H(+). The protein operates within amino-acid biosynthesis; L-arginine biosynthesis; L-arginine from L-ornithine and carbamoyl phosphate: step 2/3. The protein is Argininosuccinate synthase of Pectobacterium carotovorum subsp. carotovorum (strain PC1).